The primary structure comprises 244 residues: 3-deoxy-manno-octulosonate cytidylyltransferase (244 aa).

It belongs to the KdsB family.

Its subcellular location is the cytoplasm. It carries out the reaction 3-deoxy-alpha-D-manno-oct-2-ulosonate + CTP = CMP-3-deoxy-beta-D-manno-octulosonate + diphosphate. It participates in nucleotide-sugar biosynthesis; CMP-3-deoxy-D-manno-octulosonate biosynthesis; CMP-3-deoxy-D-manno-octulosonate from 3-deoxy-D-manno-octulosonate and CTP: step 1/1. It functions in the pathway bacterial outer membrane biogenesis; lipopolysaccharide biosynthesis. Its function is as follows. Activates KDO (a required 8-carbon sugar) for incorporation into bacterial lipopolysaccharide in Gram-negative bacteria. The polypeptide is 3-deoxy-manno-octulosonate cytidylyltransferase (Dichelobacter nodosus (strain VCS1703A)).